Reading from the N-terminus, the 440-residue chain is 6-phospho-alpha-glucosidase (440 aa).

4–70 is an NAD(+) binding site; it reads FSVVIAGGGS…PEIEFSYTTD (67 aa). Substrate-binding residues include R93 and N147. Mn(2+) is bound at residue C169. D170 serves as the catalytic Proton donor. Residue H200 coordinates Mn(2+). The active-site Proton acceptor is Y263. R283 contributes to the substrate binding site.

In terms of assembly, homodimer. NAD(+) is required as a cofactor. It depends on Mn(2+) as a cofactor. Co(2+) serves as cofactor. Requires Ni(2+) as cofactor.

It catalyses the reaction alpha-maltose 6'-phosphate + H2O = D-glucose 6-phosphate + D-glucose. It participates in glycan biosynthesis; sucrose metabolism. In terms of biological role, is involved in the catabolism of alpha-glycosides accumulated via a phosphoenolpyruvate-dependent phosphotransferase system (PEP-PTS). Hydrolyzes a wide variety of 6-phospho-alpha-D-glucosides including maltose-6'-phosphate, isomaltose-6'-phosphate, maltitol-6-phosphate, trehalose-6-phosphate and the 6'-phosphorylated derivatives of the five linkage-isomeric alpha-D-glucosyl-D-fructoses: trehalulose-6'-phosphate, turanose-6'-phosphate, maltulose-6'-phosphate, leucrose-6'-phosphate, and palatinose-6'-phosphate. However, sucrose-6-phosphate is not a substrate for this enzyme. In Klebsiella pneumoniae, this protein is 6-phospho-alpha-glucosidase.